We begin with the raw amino-acid sequence, 230 residues long: NAD(P)H-hydrate epimerase (230 aa).

The 213-residue stretch at 11–223 (YAAADIRAAE…DVGLDLSGAT (213 aa)) folds into the YjeF N-terminal domain. 59 to 63 (NNGGD) contributes to the (6S)-NADPHX binding site. Positions 60 and 125 each coordinate K(+). Residues 129-137 (GIGTTDSPA) and aspartate 165 each bind (6S)-NADPHX. Residue serine 168 coordinates K(+).

This sequence belongs to the NnrE/AIBP family. K(+) serves as cofactor.

It carries out the reaction (6R)-NADHX = (6S)-NADHX. The enzyme catalyses (6R)-NADPHX = (6S)-NADPHX. Its function is as follows. Catalyzes the epimerization of the S- and R-forms of NAD(P)HX, a damaged form of NAD(P)H that is a result of enzymatic or heat-dependent hydration. This is a prerequisite for the S-specific NAD(P)H-hydrate dehydratase to allow the repair of both epimers of NAD(P)HX. This is NAD(P)H-hydrate epimerase from Clavibacter michiganensis subsp. michiganensis (strain NCPPB 382).